The sequence spans 253 residues: Sulfate transporter CysZ (253 aa).

The next 4 membrane-spanning stretches (helical) occupy residues 31-51, 75-95, 151-171, and 222-242; these read FVILPLLVNILLMGGAFWWLF, LLWPLAVISVLLVFGYFFSTI, IVLLILYFIPGIGQTVAPVLW, and IPLLNLFIMPVAVCGATAMWV.

It belongs to the CysZ family.

It is found in the cell inner membrane. Functionally, high affinity, high specificity proton-dependent sulfate transporter, which mediates sulfate uptake. Provides the sulfur source for the cysteine synthesis pathway. The chain is Sulfate transporter CysZ from Escherichia coli O127:H6 (strain E2348/69 / EPEC).